Reading from the N-terminus, the 590-residue chain is Acetolactate synthase large subunit (590 aa).

E61 is a thiamine diphosphate binding site. Residues R163, 271 to 292 (HGTA…LGAR), and 314 to 333 (DIDP…IVGD) each bind FAD. The interval 405–484 (QHQMWSAQFL…VKIIIINNRW (80 aa)) is thiamine pyrophosphate binding. Residues D455 and N482 each coordinate Mg(2+).

This sequence belongs to the TPP enzyme family. As to quaternary structure, dimer of large and small chains. It depends on Mg(2+) as a cofactor. Thiamine diphosphate serves as cofactor.

The protein localises to the plastid. The protein resides in the chloroplast. It carries out the reaction 2 pyruvate + H(+) = (2S)-2-acetolactate + CO2. The protein operates within amino-acid biosynthesis; L-isoleucine biosynthesis; L-isoleucine from 2-oxobutanoate: step 1/4. It participates in amino-acid biosynthesis; L-valine biosynthesis; L-valine from pyruvate: step 1/4. This is Acetolactate synthase large subunit (ilvB) from Pyropia yezoensis (Susabi-nori).